A 163-amino-acid polypeptide reads, in one-letter code: Nucleotide-binding protein KPN78578_03700 (163 aa).

The protein belongs to the YajQ family.

In terms of biological role, nucleotide-binding protein. This is Nucleotide-binding protein KPN78578_03700 from Klebsiella pneumoniae subsp. pneumoniae (strain ATCC 700721 / MGH 78578).